An 81-amino-acid chain; its full sequence is Small cysteine-rich protein 6 (81 aa).

The first 23 residues, 1-23 (MDTKVACLLLIILGALTVQGAVS), serve as a signal peptide directing secretion. A propeptide spanning residues 24–25 (GN) is cleaved from the precursor.

It belongs to the Cnidaria small cysteine-rich protein (SCRiP) family. beta subfamily. Post-translationally, contains 4 disulfide bonds.

Its subcellular location is the secreted. It localises to the nematocyst. Its function is as follows. Induces neurotoxic symptoms on zebrafish. Has also been claimed to be implied in calcification, but tests on homolog proteins suggest that proteins of this family have a neurotoxic function and not a calcification function. This Orbicella faveolata (Mountainous star coral) protein is Small cysteine-rich protein 6.